A 140-amino-acid polypeptide reads, in one-letter code: Large ribosomal subunit protein uL11 (140 aa).

This sequence belongs to the universal ribosomal protein uL11 family. As to quaternary structure, part of the ribosomal stalk of the 50S ribosomal subunit. Interacts with L10 and the large rRNA to form the base of the stalk. L10 forms an elongated spine to which L12 dimers bind in a sequential fashion forming a multimeric L10(L12)X complex. Post-translationally, one or more lysine residues are methylated.

Functionally, forms part of the ribosomal stalk which helps the ribosome interact with GTP-bound translation factors. In Desulfatibacillum aliphaticivorans, this protein is Large ribosomal subunit protein uL11.